The chain runs to 246 residues: tRNA (guanine-N(1)-)-methyltransferase (246 aa).

Residues G112 and I131–L136 each bind S-adenosyl-L-methionine.

The protein belongs to the RNA methyltransferase TrmD family. Homodimer.

It localises to the cytoplasm. It catalyses the reaction guanosine(37) in tRNA + S-adenosyl-L-methionine = N(1)-methylguanosine(37) in tRNA + S-adenosyl-L-homocysteine + H(+). In terms of biological role, specifically methylates guanosine-37 in various tRNAs. In Thermosipho melanesiensis (strain DSM 12029 / CIP 104789 / BI429), this protein is tRNA (guanine-N(1)-)-methyltransferase.